A 380-amino-acid chain; its full sequence is Succinyl-diaminopimelate desuccinylase (380 aa).

Histidine 69 is a binding site for Zn(2+). Aspartate 71 is an active-site residue. Aspartate 102 serves as a coordination point for Zn(2+). The active-site Proton acceptor is glutamate 135. Residues glutamate 136, glutamate 164, and histidine 353 each coordinate Zn(2+).

The protein belongs to the peptidase M20A family. DapE subfamily. In terms of assembly, homodimer. It depends on Zn(2+) as a cofactor. The cofactor is Co(2+).

The enzyme catalyses N-succinyl-(2S,6S)-2,6-diaminopimelate + H2O = (2S,6S)-2,6-diaminopimelate + succinate. It functions in the pathway amino-acid biosynthesis; L-lysine biosynthesis via DAP pathway; LL-2,6-diaminopimelate from (S)-tetrahydrodipicolinate (succinylase route): step 3/3. In terms of biological role, catalyzes the hydrolysis of N-succinyl-L,L-diaminopimelic acid (SDAP), forming succinate and LL-2,6-diaminopimelate (DAP), an intermediate involved in the bacterial biosynthesis of lysine and meso-diaminopimelic acid, an essential component of bacterial cell walls. The polypeptide is Succinyl-diaminopimelate desuccinylase (Phenylobacterium zucineum (strain HLK1)).